The chain runs to 206 residues: Adenylate kinase (206 aa).

Residue 10-15 (GAGKGT) participates in ATP binding. The segment at 30 to 59 (STGDILREAVQKGTPLGKKAKEYMERGELV) is NMP. AMP contacts are provided by residues Thr-31, 57–59 (ELV), 82–85 (GFPR), and Gln-89. Residues Arg-120, Arg-124, and 133 to 134 (VY) contribute to the ATP site. The tract at residues 123–153 (GRRINPETGEVYHVKYNPPPPGVKVIQREDD) is LID. AMP is bound at residue Arg-161. Lys-189 is a binding site for ATP.

Belongs to the adenylate kinase family. In terms of assembly, monomer.

It localises to the cytoplasm. It carries out the reaction AMP + ATP = 2 ADP. The protein operates within purine metabolism; AMP biosynthesis via salvage pathway; AMP from ADP: step 1/1. Catalyzes the reversible transfer of the terminal phosphate group between ATP and AMP. Plays an important role in cellular energy homeostasis and in adenine nucleotide metabolism. The chain is Adenylate kinase from Aquifex aeolicus (strain VF5).